The chain runs to 640 residues: DNA topoisomerase 3 (640 aa).

A Toprim domain is found at 21-175 (RVLCVAEKNS…WRAQFSHLEP (155 aa)). The Mg(2+) site is built by E27, D137, and D139. One can recognise a Topo IA-type catalytic domain in the interval 189–618 (DMKLVAAVEC…QLLPLYKEAF (430 aa)). Residue Y354 is the O-(5'-phospho-DNA)-tyrosine intermediate of the active site.

Belongs to the type IA topoisomerase family. Requires Mg(2+) as cofactor.

It catalyses the reaction ATP-independent breakage of single-stranded DNA, followed by passage and rejoining.. In terms of biological role, introduces a single-strand break via transesterification at a target site in duplex DNA. Releases the supercoiling and torsional tension of DNA introduced during the DNA replication and transcription by transiently cleaving and rejoining one strand of the DNA duplex. The scissile phosphodiester is attacked by the catalytic tyrosine of the enzyme, resulting in the formation of a DNA-(5'-phosphotyrosyl)-enzyme intermediate and the expulsion of a 3'-OH DNA strand. This is DNA topoisomerase 3 (TOP3) from Candidozyma auris (Yeast).